The chain runs to 242 residues: Phosphatidylethanolamine-binding protein 4 (242 aa).

The signal sequence occupies residues 1 to 26 (MTMKLVAAALCLSLLAAGLWVGLSLT). The segment at 31-50 (EEGKPGGEKPGGGKPGGSGR) is disordered. Gly residues predominate over residues 38 to 50 (EKPGGGKPGGSGR). Residues asparagine 77 and asparagine 139 are each glycosylated (N-linked (GlcNAc...) asparagine). The important for secretion stretch occupies residues 210–242 (DPDTSTQFMTQFDEELSSEFGRINDDQEQFNQK).

It belongs to the phosphatidylethanolamine-binding protein family.

Its subcellular location is the secreted. In terms of biological role, promotes AKT phosphorylation, suggesting a possible role in the PI3K-AKT signaling pathway. The sequence is that of Phosphatidylethanolamine-binding protein 4 (Pebp4) from Mus musculus (Mouse).